A 200-amino-acid polypeptide reads, in one-letter code: uncharacterized protein (200 aa).

An N-terminal signal peptide occupies residues 1–24 (MSRVFSCVLRACVCAGLCCWVCMG). Residues 124–200 (GGRDLPMHGA…GEGGDNGEGE (77 aa)) are disordered. A compositionally biased stretch (acidic residues) spans 184–200 (LGDEGETGEGGDNGEGE).

This is an uncharacterized protein from Homo sapiens (Human).